A 416-amino-acid chain; its full sequence is tRNA (guanine-N(7)-)-methyltransferase non-catalytic subunit wuho (416 aa).

The tract at residues 47–88 (TQSQESCPATATSTTAGKEPGGKEQQLAKQPEEGGTSASGSV) is disordered. Residues 49 to 62 (SQESCPATATSTTA) are compositionally biased toward polar residues. 4 WD repeats span residues 89–130 (ATST…ARLL), 177–216 (GHLSVVYDILWSEDQQHIITCDRDDKIRVTNYPATFDIHS), 220–258 (GHREFVSGLALLTEQHIASASGDKTLRVWNYIQGKELLQ), and 317–357 (AGSW…PTTN).

Belongs to the WD repeat TRM82 family. Forms a heterodimer with the catalytic subunit Mettl1. Interacts with mei-P26 and weakly interacts with bgcn; required for the function or formation of the mei-P26-bgcn-bam-sxl complex. Interacts with nanos; may be involved in mei-P26-dependent derepression of the BMP signaling pathway. Interacts with Myc; the interaction may be mediated by mei-P26 and may be involved in the regulation of ribosome biogenesis. In testis, it is present at high level in hub cells, a niche for germline stem cells of testis. Ubiquitously expressed in all testicular cells throughout spermatogenesis. Ubiquitously expressed in all germline and somatic cells of the ovary.

It is found in the nucleus. It localises to the cytoplasm. Its pathway is tRNA modification; N(7)-methylguanine-tRNA biosynthesis. Its function is as follows. Required for the Mettl1-dependent formation of N(7)-methylguanine at position 46 (m7G46) in tRNA. In the Mettl1-wuho methyltransferase complex, it is required to stabilize and induce conformational changes of the catalytic subunit. Required for binding of nanos mRNA and repression of translation by the mei-P26-bgcn-bam-sxl complex. May cooperate with mei-P26 and nanos to derepress the BMP signaling pathway. May cooperate with mei-P26 to suppress expression of a subset of microRNAs. May cooperate with mei-P26 to regulate bam expression levels in germline cells during gametogenesis. Required to promote mitosis to meiosis transition during gametogenesis. May regulate germline cell division in part by regulating ribosome biogenesis. This chain is tRNA (guanine-N(7)-)-methyltransferase non-catalytic subunit wuho, found in Drosophila erecta (Fruit fly).